The sequence spans 326 residues: MSNNASPQAAYVPAVKPVSKSSKTTFHFGAGLLSGLTSSILLQPADLLKTRVQQSAHPSSVFSTVKAILSSPNPVRNLWRGTLPSALRTGFGSALYFTSLNALRTSLASTSLTNYDADVKKIGNGSSALPKLSHSANLATGAAARVAAGFVMMPVTVLKVRYESDYYAYRSLYSAGRDIVRTEGVRGLFSGFGATAARDAPYAGLYVLFYEQLKRYLSATTSSTELPSSSSINFVSGGLAAGLATAITNPFDAVKTRLQLMPGKYGNMIRAVRLMVREDGVRSLFGGLGLRIGRKALSSALAWTVYEELILRAEMKWARDEAEARL.

Solcar repeat units lie at residues 22–106 (SKTT…LRTS), 135–216 (SANL…LKRY), and 228–312 (SSSS…LILR). Helical transmembrane passes span 28-53 (FGAGLLSGLTSSILLQPADLLKTRVQ), 81-107 (GTLPSALRTGFGSALYFTSLNALRTSL), 138-163 (LATGAAARVAAGFVMMPVTVLKVRYE), 191-214 (GFGATAARDAPYAGLYVLFYEQLK), 232-258 (INFVSGGLAAGLATAITNPFDAVKTRL), and 287-305 (GLGLRIGRKALSSALAWTV).

Belongs to the mitochondrial carrier (TC 2.A.29) family. SLC25A38 subfamily.

Its subcellular location is the mitochondrion inner membrane. The enzyme catalyses glycine(in) = glycine(out). Mitochondrial glycine transporter that imports glycine into the mitochondrial matrix. Plays an important role in providing glycine for the first enzymatic step in heme biosynthesis, the condensation of glycine with succinyl-CoA to produce 5-aminolevulinate (ALA) in the mitochondrial matrix. The sequence is that of Mitochondrial glycine transporter from Emericella nidulans (strain FGSC A4 / ATCC 38163 / CBS 112.46 / NRRL 194 / M139) (Aspergillus nidulans).